The following is a 355-amino-acid chain: (3aS,4S,5R,7aS)-5-hydroxy-7a-methyl-1-oxo-octahydro-1H-indene-4-carboxyl-CoA dehydrogenase (355 aa).

Residues 21–23, 173–175, and 196–197 contribute to the FMN site; these read GMG, AGG, and GT.

It belongs to the nitronate monooxygenase family.

The enzyme catalyses (3aS,4S,5R,7aS)-5-hydroxy-7a-methyl-1-oxo-octahydro-1H-indene-4-carboxyl-CoA + NAD(+) = (5R,7aS)-5-hydroxy-7a-methyl-1-oxo-2,3,5,6,7,7a-hexahydro-1H-indene-carboxyl-CoA + NADH + H(+). It functions in the pathway steroid metabolism; cholesterol degradation. With respect to regulation, requires the presence of IpdF. Functionally, involved in the final steps of cholesterol and steroid degradation. Probably catalyzes the introduction of a double bound into the C ring of 5OH-HIC-CoA, leading to the formation of (5R,7aS)-5-hydroxy-7a-methyl-1-oxo-3,5,6,7-tetrahydro-2H-indene-4-carboxyl-CoA. The polypeptide is (3aS,4S,5R,7aS)-5-hydroxy-7a-methyl-1-oxo-octahydro-1H-indene-4-carboxyl-CoA dehydrogenase (Mycobacterium tuberculosis (strain ATCC 25618 / H37Rv)).